The chain runs to 79 residues: NADH-ubiquinone oxidoreductase chain 5 (79 aa).

Transmembrane regions (helical) follow at residues 5-27 (TPIM…TNPY) and 40-57 (VMYA…FILS).

Belongs to the complex I subunit 5 family. As to quaternary structure, core subunit of respiratory chain NADH dehydrogenase (Complex I) which is composed of 45 different subunits.

It is found in the mitochondrion inner membrane. The catalysed reaction is a ubiquinone + NADH + 5 H(+)(in) = a ubiquinol + NAD(+) + 4 H(+)(out). Functionally, core subunit of the mitochondrial membrane respiratory chain NADH dehydrogenase (Complex I) which catalyzes electron transfer from NADH through the respiratory chain, using ubiquinone as an electron acceptor. Essential for the catalytic activity and assembly of complex I. This is NADH-ubiquinone oxidoreductase chain 5 (MT-ND5) from Macaca fascicularis (Crab-eating macaque).